A 152-amino-acid polypeptide reads, in one-letter code: Lipoprotein signal peptidase (152 aa).

Helical transmembrane passes span 55–75 (NKMWFFYIITVIFVAFIVFYM) and 85–105 (LGISLGLILGGAIGNFIDRVF). Active-site residues include D111 and D129. A helical transmembrane segment spans residues 124–144 (VFNIADSALCIGVVLIIIQTV).

The protein belongs to the peptidase A8 family.

The protein localises to the cell membrane. It catalyses the reaction Release of signal peptides from bacterial membrane prolipoproteins. Hydrolyzes -Xaa-Yaa-Zaa-|-(S,diacylglyceryl)Cys-, in which Xaa is hydrophobic (preferably Leu), and Yaa (Ala or Ser) and Zaa (Gly or Ala) have small, neutral side chains.. It functions in the pathway protein modification; lipoprotein biosynthesis (signal peptide cleavage). Functionally, this protein specifically catalyzes the removal of signal peptides from prolipoproteins. The chain is Lipoprotein signal peptidase from Bacillus mycoides (strain KBAB4) (Bacillus weihenstephanensis).